The sequence spans 29 residues: MKNRVYESLTTVFSVLVVSSFLYIWFATY.

A helical transmembrane segment spans residues 5–27; the sequence is VYESLTTVFSVLVVSSFLYIWFA.

Its subcellular location is the cell inner membrane. Functionally, may bind to BasS and modulate its sensor kinase activity. The chain is Putative membrane protein PmrR (pmrR) from Escherichia coli (strain K12).